Here is a 343-residue protein sequence, read N- to C-terminus: Glucokinase (343 aa).

18-23 (GDIGGT) provides a ligand contact to ATP.

Belongs to the bacterial glucokinase family.

It localises to the cytoplasm. The enzyme catalyses D-glucose + ATP = D-glucose 6-phosphate + ADP + H(+). In Brucella suis biovar 1 (strain 1330), this protein is Glucokinase.